The primary structure comprises 550 residues: Arginine--tRNA ligase (550 aa).

A 'HIGH' region motif is present at residues 122–132 (GNPTGPLHLAH).

The protein belongs to the class-I aminoacyl-tRNA synthetase family. Monomer.

Its subcellular location is the cytoplasm. It catalyses the reaction tRNA(Arg) + L-arginine + ATP = L-arginyl-tRNA(Arg) + AMP + diphosphate. The sequence is that of Arginine--tRNA ligase from Tropheryma whipplei (strain TW08/27) (Whipple's bacillus).